Reading from the N-terminus, the 443-residue chain is tRNA modification GTPase MnmE (443 aa).

Arg23, Glu82, and Lys121 together coordinate (6S)-5-formyl-5,6,7,8-tetrahydrofolate. The region spanning 215 to 364 is the TrmE-type G domain; sequence GTSIVLAGHP…LKQFIQQWMQ (150 aa). Asn225 is a K(+) binding site. Residues 225–230, 244–250, and 269–272 contribute to the GTP site; these read NAGKSS, TDIPGTT, and DSAG. Mg(2+) is bound at residue Ser229. K(+) contacts are provided by Thr244, Ile246, and Thr249. Residue Thr250 participates in Mg(2+) binding. A (6S)-5-formyl-5,6,7,8-tetrahydrofolate-binding site is contributed by Lys443.

The protein belongs to the TRAFAC class TrmE-Era-EngA-EngB-Septin-like GTPase superfamily. TrmE GTPase family. In terms of assembly, homodimer. Heterotetramer of two MnmE and two MnmG subunits. It depends on K(+) as a cofactor.

It is found in the cytoplasm. Its function is as follows. Exhibits a very high intrinsic GTPase hydrolysis rate. Involved in the addition of a carboxymethylaminomethyl (cmnm) group at the wobble position (U34) of certain tRNAs, forming tRNA-cmnm(5)s(2)U34. The polypeptide is tRNA modification GTPase MnmE (Chlamydia abortus (strain DSM 27085 / S26/3) (Chlamydophila abortus)).